The chain runs to 211 residues: NADH-quinone oxidoreductase subunit I (211 aa).

Residues 21-41 (PTTEQYPEQKKETAPRFHGRH) are disordered. 2 consecutive 4Fe-4S ferredoxin-type domains span residues 43–73 (LNRHPDGLEKCVGCELCAWACPADAIYVEGA) and 89–118 (RVYQINYLRCILCGLCIEACPTRALTMSND). Residues C53, C56, C59, C63, C98, C101, C104, and C108 each contribute to the [4Fe-4S] cluster site. The segment at 141–211 (RAGMESPPHP…AHGAGSERPR (71 aa)) is disordered. The segment covering 152–166 (RLGESETDYYTRDPD) has biased composition (basic and acidic residues). Residues 179 to 191 (DEADEAGEAGEAG) are compositionally biased toward acidic residues. A compositionally biased stretch (basic and acidic residues) spans 192-211 (EAERAADKVPAHGAGSERPR).

It belongs to the complex I 23 kDa subunit family. NDH-1 is composed of 14 different subunits. Subunits NuoA, H, J, K, L, M, N constitute the membrane sector of the complex. It depends on [4Fe-4S] cluster as a cofactor.

Its subcellular location is the cell membrane. It catalyses the reaction a quinone + NADH + 5 H(+)(in) = a quinol + NAD(+) + 4 H(+)(out). In terms of biological role, NDH-1 shuttles electrons from NADH, via FMN and iron-sulfur (Fe-S) centers, to quinones in the respiratory chain. The immediate electron acceptor for the enzyme in this species is believed to be ubiquinone. Couples the redox reaction to proton translocation (for every two electrons transferred, four hydrogen ions are translocated across the cytoplasmic membrane), and thus conserves the redox energy in a proton gradient. This chain is NADH-quinone oxidoreductase subunit I, found in Parafrankia sp. (strain EAN1pec).